Consider the following 88-residue polypeptide: Small ribosomal subunit protein bS20 (88 aa).

The disordered stretch occupies residues 1 to 20 (MANTAQARKRARQAVVQNAH).

This sequence belongs to the bacterial ribosomal protein bS20 family.

Binds directly to 16S ribosomal RNA. In Ralstonia nicotianae (strain ATCC BAA-1114 / GMI1000) (Ralstonia solanacearum), this protein is Small ribosomal subunit protein bS20.